A 124-amino-acid polypeptide reads, in one-letter code: Small ribosomal subunit protein uS12cz/uS12cy (124 aa).

Belongs to the universal ribosomal protein uS12 family. Part of the 30S ribosomal subunit.

The protein resides in the plastid. The protein localises to the chloroplast. In terms of biological role, with S4 and S5 plays an important role in translational accuracy. Located at the interface of the 30S and 50S subunits. The polypeptide is Small ribosomal subunit protein uS12cz/uS12cy (rps12-A) (Agrostis stolonifera (Creeping bentgrass)).